The primary structure comprises 208 residues: Ribosome maturation factor RimP (208 aa).

A disordered region spans residues 175 to 208; that stretch reads GEDVEDLVADPGADDELDELDELDELDDGDEDEQ. Positions 177–208 are enriched in acidic residues; it reads DVEDLVADPGADDELDELDELDELDDGDEDEQ.

Belongs to the RimP family.

Its subcellular location is the cytoplasm. Functionally, required for maturation of 30S ribosomal subunits. This Kineococcus radiotolerans (strain ATCC BAA-149 / DSM 14245 / SRS30216) protein is Ribosome maturation factor RimP.